Reading from the N-terminus, the 487-residue chain is UDP-N-acetylmuramate--L-alanine ligase (487 aa).

Position 129–135 (129–135 (GTHGKTT)) interacts with ATP.

Belongs to the MurCDEF family.

The protein localises to the cytoplasm. It catalyses the reaction UDP-N-acetyl-alpha-D-muramate + L-alanine + ATP = UDP-N-acetyl-alpha-D-muramoyl-L-alanine + ADP + phosphate + H(+). The protein operates within cell wall biogenesis; peptidoglycan biosynthesis. Cell wall formation. The protein is UDP-N-acetylmuramate--L-alanine ligase of Aliivibrio salmonicida (strain LFI1238) (Vibrio salmonicida (strain LFI1238)).